The following is a 1061-amino-acid chain: Atrial natriuretic peptide receptor 1 (1061 aa).

The N-terminal stretch at 1–32 (MPGPRRPAGSRLRLLLLLLLPPLLLLLRGSHA) is a signal peptide. Residues 33-473 (GNLTVAVVLP…CNQDHLSTLE (441 aa)) are Extracellular-facing. Residues N34 and N45 are each glycosylated (N-linked (GlcNAc...) asparagine). Residues S85, G117, and C118 each contribute to the chloride site. 2 disulfide bridges follow: C92–C118 and C196–C245. 5 N-linked (GlcNAc...) asparagine glycosylation sites follow: N212, N338, N379, N386, and N427. Residues C455 and C464 are joined by a disulfide bond. Residues 474-494 (VLALVGSLSLLGILIVSFFIY) traverse the membrane as a helical segment. The Cytoplasmic segment spans residues 495–1061 (RKMQLEKELA…LGERGSSTRG (567 aa)). S519 and S529 each carry phosphoserine. Residues 528-805 (GSRLTLSGRG…QIRLTLRKFN (278 aa)) form the Protein kinase domain. T532 carries the phosphothreonine modification. A phosphoserine mark is found at S534, S538, and S542. Phosphothreonine is present on T545. In terms of domain architecture, Guanylate cyclase spans 876–1006 (TIYFSDIVGF…DTVNTASRME (131 aa)).

Belongs to the adenylyl cyclase class-4/guanylyl cyclase family. Homodimer. In terms of processing, phosphorylation of the protein kinase-like domain is required for full activation by ANP.

Its subcellular location is the membrane. It carries out the reaction GTP = 3',5'-cyclic GMP + diphosphate. Receptor for the atrial natriuretic peptide NPPA/ANP and the brain natriuretic peptide NPPB/BNP which are potent vasoactive hormones playing a key role in cardiovascular homeostasis. Plays an essential role in the regulation of endothelial cell senescence and vascular aging. Upon activation by ANP or BNP, stimulates the production of cyclic guanosine monophosphate (cGMP) that promotes vascular tone and volume homeostasis by activation of protein kinase cGMP-dependent 1/PRKG1 and subsequently PRKAA1, thereby controlling blood pressure and maintaining cardiovascular homeostasis. The polypeptide is Atrial natriuretic peptide receptor 1 (Homo sapiens (Human)).